The following is a 398-amino-acid chain: ATP-dependent RNA helicase eIF4A (398 aa).

Positions 25-53 (DSFDSMDLKPELLRGIYAYGFERPSAIQQ) match the Q motif motif. The region spanning 56–226 (IMPIIKGSDV…TKFMRDPVRI (171 aa)) is the Helicase ATP-binding domain. 69 to 76 (AQSGTGKT) lines the ATP pocket. Residues 174-177 (DEAD) carry the DEAD box motif. Positions 237–398 (GIKQFYIAVE…EMPMNVADLI (162 aa)) constitute a Helicase C-terminal domain.

The protein belongs to the DEAD box helicase family. eIF4A subfamily. As to quaternary structure, component of the eIF4F complex, which composition varies with external and internal environmental conditions. It is composed of at least eIF4A, eIF4E and eIF4G.

It is found in the cytoplasm. It catalyses the reaction ATP + H2O = ADP + phosphate + H(+). ATP-dependent RNA helicase which is a subunit of the eIF4F complex involved in cap recognition and is required for mRNA binding to ribosome. In the current model of translation initiation, eIF4A unwinds RNA secondary structures in the 5'-UTR of mRNAs which is necessary to allow efficient binding of the small ribosomal subunit, and subsequent scanning for the initiator codon. The protein is ATP-dependent RNA helicase eIF4A (tif1) of Aspergillus clavatus (strain ATCC 1007 / CBS 513.65 / DSM 816 / NCTC 3887 / NRRL 1 / QM 1276 / 107).